Reading from the N-terminus, the 64-residue chain is Conotoxin Mr3.5 (64 aa).

Positions 1–19 are cleaved as a signal peptide; it reads MSKLGVLLTICLLLFPLTA. The propeptide occupies 20–46; sequence LPLDGDQPADQRAERTQAEKHSLPDPR. 3 cysteine pairs are disulfide-bonded: Cys-49/Cys-58, Cys-50/Cys-62, and Cys-54/Cys-63. Cys-63 bears the Cysteine amide mark.

The protein belongs to the conotoxin M superfamily. As to expression, expressed by the venom duct.

Its subcellular location is the secreted. This is Conotoxin Mr3.5 from Conus marmoreus (Marble cone).